We begin with the raw amino-acid sequence, 950 residues long: A disintegrin and metalloproteinase with thrombospondin motifs 15 (950 aa).

The signal sequence occupies residues 1–18 (MLLLGISILALAWRPAGS). A propeptide spanning residues 19–212 (SEPEWEVVVP…NRRRSGRAKR (194 aa)) is cleaved from the precursor. A glycan (N-linked (GlcNAc...) asparagine) is linked at Asn141. Residues 144–172 (APEAQRHSQGAHLLQRRGAPVGPSGDPTS) are disordered. The short motif at 172–179 (SRCGVASG) is the Cysteine switch element. Position 174 (Cys174) interacts with Zn(2+). The Peptidase M12B domain occupies 218–427 (RYVETLVVAD…GHGDCLLDQP (210 aa)). Disulfide bonds link Cys293/Cys345, Cys322/Cys327, Cys339/Cys422, Cys377/Cys406, Cys448/Cys470, Cys459/Cys480, Cys465/Cys499, Cys493/Cys504, Cys528/Cys565, Cys532/Cys570, and Cys543/Cys555. Zn(2+) is bound at residue His361. Glu362 is an active-site residue. Residues His365 and His371 each contribute to the Zn(2+) site. A Disintegrin domain is found at 428–515 (SKPITLPEDL…ERHNPNKYRV (88 aa)). The region spanning 516–571 (DGSWAKWEPYGSCSRTCGGGVQLARRQCSNPTPANGGKYCEGVRVKYRSCNLEPCP) is the TSP type-1 1 domain. Residues Asn591, Asn623, and Asn679 are each glycosylated (N-linked (GlcNAc...) asparagine). The tract at residues 701–838 (AIPAGASSID…SNQVEQPDNR (138 aa)) is spacer. Positions 798-822 (FYLPKEPREDKSTRPKDPRGSPVLR) are disordered. Over residues 802-816 (KEPREDKSTRPKDPR) the composition is skewed to basic and acidic residues. TSP type-1 domains follow at residues 839–895 (PPAR…EPCP) and 896–949 (TWEL…VLRP).

Zn(2+) is required as a cofactor. In terms of processing, the precursor is cleaved by a furin endopeptidase. Glycosylated. Can be O-fucosylated by POFUT2 on a serine or a threonine residue found within the consensus sequence C1-X(2)-(S/T)-C2-G of the TSP type-1 repeat domains where C1 and C2 are the first and second cysteine residue of the repeat, respectively. Fucosylated repeats can then be further glycosylated by the addition of a beta-1,3-glucose residue by the glucosyltransferase, B3GALTL. Fucosylation mediates the efficient secretion of ADAMTS family members. Can be C-glycosylated with one or two mannose molecules on tryptophan residues within the consensus sequence W-X-X-W of the TPRs. Also N-glycosylated. These other glycosylations can also facilitate secretion. In terms of tissue distribution, in the adult colon, highly expressed in the muscularis externa (inner circular smooth muscle and outer longitudinal smooth muscle), muscularis mucosa, submucosal glands, crypt, villi epithelial cells, goblet cells and lamina propria. Expressed at perimuscular and peritendious areas in the developing limbs.

Its subcellular location is the secreted. The protein resides in the extracellular space. It localises to the extracellular matrix. It is found in the cell surface. Its function is as follows. Metalloprotease which has proteolytic activity against the proteoglycan VCAN, cleaving it at the 'Glu-1401-|-1402-Ala' site. Cleaves VCAN in the pericellular matrix surrounding myoblasts, facilitating myoblast contact and fusion which is required for skeletal muscle development and regeneration. This chain is A disintegrin and metalloproteinase with thrombospondin motifs 15 (Adamts15), found in Mus musculus (Mouse).